Consider the following 499-residue polypeptide: Hexokinase-2, chloroplastic (499 aa).

A chloroplast-targeting transit peptide spans 1–30 (MSVTVSSPAGRSFHISRSPYKKISKPRVII). One can recognise a Hexokinase domain in the interval 39-490 (LAVAPILTKL…SGIGAALLAA (452 aa)). The interval 94 to 232 (TGNEKGLFYA…GLGMQVSALV (139 aa)) is hexokinase small subdomain. Residues Gly108, Thr109, and Asn110 each coordinate ADP. Residues Thr198, Lys199, Asn233, and Asp234 each contribute to the D-glucose site. A hexokinase large subdomain region spans residues 233–479 (NDTVATLAGA…KNVVIEHSKD (247 aa)). Residue Thr257 coordinates ADP. 3 residues coordinate D-glucose: Asn260, Glu288, and Glu318. ADP is bound at residue Gly444.

This sequence belongs to the hexokinase family. Expressed in vascular starch sheath, xylem parenchyma, guard cells and root tips.

The protein resides in the plastid. The protein localises to the chloroplast stroma. It carries out the reaction a D-hexose + ATP = a D-hexose 6-phosphate + ADP + H(+). The enzyme catalyses D-fructose + ATP = D-fructose 6-phosphate + ADP + H(+). It catalyses the reaction D-glucose + ATP = D-glucose 6-phosphate + ADP + H(+). Its pathway is carbohydrate metabolism; hexose metabolism. It participates in carbohydrate degradation; glycolysis; D-glyceraldehyde 3-phosphate and glycerone phosphate from D-glucose: step 1/4. Fructose and glucose phosphorylating enzyme. In Nicotiana tabacum (Common tobacco), this protein is Hexokinase-2, chloroplastic (HXK2).